The primary structure comprises 421 residues: ATP-dependent RNA helicase RhlB (421 aa).

The Q motif motif lies at 9-37; that stretch reads QKFSDFALHPKVVEALEKKGFHNCTPIQA. The 180-residue stretch at 40 to 219 folds into the Helicase ATP-binding domain; that stretch reads LPLTLAGRDV…FEQMNNAEYI (180 aa). Position 53–60 (53–60) interacts with ATP; sequence AQTGTGKT. Residues 165–168 carry the DEAD box motif; that stretch reads DEAD. The Helicase C-terminal domain maps to 245-390; it reads RLLQTLIEEE…VSKYNPDALM (146 aa). Residues 392 to 421 form a disordered region; the sequence is DLPKPLRLTRPRTGNGPRRTGAPRNRRRSG. The span at 402–414 shows a compositional bias: low complexity; it reads PRTGNGPRRTGAP.

The protein belongs to the DEAD box helicase family. RhlB subfamily. Component of the RNA degradosome, which is a multiprotein complex involved in RNA processing and mRNA degradation.

It localises to the cytoplasm. The enzyme catalyses ATP + H2O = ADP + phosphate + H(+). Its function is as follows. DEAD-box RNA helicase involved in RNA degradation. Has RNA-dependent ATPase activity and unwinds double-stranded RNA. The sequence is that of ATP-dependent RNA helicase RhlB from Escherichia coli (strain SMS-3-5 / SECEC).